A 200-amino-acid chain; its full sequence is MNAMFHSLFALSFVSLVASINNQNSRYDKMFLAMVCQDQNGCEVNIRFLKQSFPDSNSTEPLYEHTMIYNNGSLDEITIDVTEDVNIIEFTFTAPDENGTTIVETDSWELNFSETYFHTIGSLQLVGNLPCGRYGCPQTPLCNGSCRFMVIVSLAAFCISVLAGLALQTVYVSFLGFRKTRKAVELRDTLRLTEAAELAH.

The signal sequence occupies residues 1–19 (MNAMFHSLFALSFVSLVAS). Residues 148 to 168 (FMVIVSLAAFCISVLAGLALQ) traverse the membrane as a helical segment.

The protein localises to the membrane. This is an uncharacterized protein from Caenorhabditis elegans.